The primary structure comprises 149 residues: Small ribosomal subunit protein uS19 (149 aa).

This sequence belongs to the universal ribosomal protein uS19 family.

Its function is as follows. Protein S19 forms a complex with S13 that binds strongly to the 16S ribosomal RNA. This chain is Small ribosomal subunit protein uS19, found in Methanopyrus kandleri (strain AV19 / DSM 6324 / JCM 9639 / NBRC 100938).